A 328-amino-acid polypeptide reads, in one-letter code: GMP reductase (328 aa).

The active-site Thioimidate intermediate is the Cys-176. NADP(+) is bound at residue Ile-205–Ile-228.

Belongs to the IMPDH/GMPR family. GuaC type 2 subfamily.

The enzyme catalyses IMP + NH4(+) + NADP(+) = GMP + NADPH + 2 H(+). Catalyzes the irreversible NADPH-dependent deamination of GMP to IMP. It functions in the conversion of nucleobase, nucleoside and nucleotide derivatives of G to A nucleotides, and in maintaining the intracellular balance of A and G nucleotides. This Streptococcus pneumoniae serotype 4 (strain ATCC BAA-334 / TIGR4) protein is GMP reductase.